The following is a 204-amino-acid chain: Peptide deformylase (204 aa).

2 residues coordinate Fe cation: C131 and H174. Residue E175 is part of the active site. H178 contacts Fe cation.

Belongs to the polypeptide deformylase family. The cofactor is Fe(2+).

It carries out the reaction N-terminal N-formyl-L-methionyl-[peptide] + H2O = N-terminal L-methionyl-[peptide] + formate. Removes the formyl group from the N-terminal Met of newly synthesized proteins. Requires at least a dipeptide for an efficient rate of reaction. N-terminal L-methionine is a prerequisite for activity but the enzyme has broad specificity at other positions. The chain is Peptide deformylase from Streptococcus mutans serotype c (strain ATCC 700610 / UA159).